A 732-amino-acid polypeptide reads, in one-letter code: Polyribonucleotide nucleotidyltransferase (732 aa).

Positions 489 and 495 each coordinate Mg(2+). In terms of domain architecture, KH spans 556–615; it reads PKIDTIQIDVDKIKIVIGKGGETIDKIIAETGVKIDIDEEGLVQIFSSDQAAIDRTKEII. The region spanning 625–693 is the S1 motif domain; it reads GEVYHAKVVR…DKGRVDASMK (69 aa). A disordered region spans residues 691–732; sequence SMKALIPRPPKPEKKEEKASEAKEASNDQASKSQSETASEEK. Basic and acidic residues predominate over residues 700-716; that stretch reads PKPEKKEEKASEAKEAS. The span at 717–732 shows a compositional bias: polar residues; the sequence is NDQASKSQSETASEEK.

This sequence belongs to the polyribonucleotide nucleotidyltransferase family. Mg(2+) serves as cofactor.

The protein resides in the cytoplasm. It carries out the reaction RNA(n+1) + phosphate = RNA(n) + a ribonucleoside 5'-diphosphate. In terms of biological role, involved in mRNA degradation. Catalyzes the phosphorolysis of single-stranded polyribonucleotides processively in the 3'- to 5'-direction. This chain is Polyribonucleotide nucleotidyltransferase, found in Streptococcus uberis (strain ATCC BAA-854 / 0140J).